The sequence spans 416 residues: LysM domain-containing GPI-anchored protein 1 (416 aa).

A signal peptide spans 1–27; that stretch reads MKIPEKPIFLIFVSLILASSLTFTATA. 4 cysteine pairs are disulfide-bonded: cysteine 34/cysteine 100, cysteine 40/cysteine 163, cysteine 98/cysteine 161, and cysteine 100/cysteine 163. N-linked (GlcNAc...) asparagine glycosylation is present at asparagine 37. Residues 110–157 form the LysM 1 domain; that stretch reads THYKTRPSDNLGSIADSVYGGLVSAEQIQEANSVNDPSLLDVGTSLVI. Asparagine 165 carries an N-linked (GlcNAc...) asparagine glycan. Positions 176 to 219 constitute a LysM 2 domain; sequence LSYVVKEIDTLVGIARRYSTTITDLMNVNAMGAPDVSSGDILAV. Intrachain disulfides connect cysteine 224/cysteine 256 and cysteine 251/cysteine 279. N-linked (GlcNAc...) asparagine glycosylation is present at asparagine 241. N-linked (GlcNAc...) asparagine glycosylation is found at asparagine 288, asparagine 299, and asparagine 310. The disordered stretch occupies residues 356 to 376; that stretch reads DGPGSIASSPRSSMLPGGGIL. The GPI-anchor amidated alanine moiety is linked to residue alanine 391. The propeptide at 392 to 416 is removed in mature form; the sequence is SASSVSYFFITFLISIASFSLALSS.

Interacts with peptidoglycans.

It is found in the cell membrane. Its subcellular location is the secreted. Functionally, required as a cell surface receptor for peptidoglycan (PGN) elicitor signaling leading to innate immunity. Plays an essential role in detecting PGNs and restricting bacterial growth (of Pseudomonas syringae pv. tomato DC3000 for example). The sequence is that of LysM domain-containing GPI-anchored protein 1 (LYM1) from Arabidopsis thaliana (Mouse-ear cress).